We begin with the raw amino-acid sequence, 221 residues long: Large ribosomal subunit protein uL1 (221 aa).

This sequence belongs to the universal ribosomal protein uL1 family. In terms of assembly, part of the 50S ribosomal subunit.

Functionally, probably involved in E site tRNA release. Binds directly to 23S rRNA. Its function is as follows. Protein L1 is also a translational repressor protein, it controls the translation of its operon by binding to its mRNA. The polypeptide is Large ribosomal subunit protein uL1 (Sulfolobus acidocaldarius (strain ATCC 33909 / DSM 639 / JCM 8929 / NBRC 15157 / NCIMB 11770)).